A 351-amino-acid chain; its full sequence is DNA polymerase IV (351 aa).

One can recognise a UmuC domain in the interval 4–185; sequence IIHVDMDCFF…LPLAKIPGVG (182 aa). Mg(2+) is bound by residues aspartate 8 and aspartate 103. Glutamate 104 is a catalytic residue.

The protein belongs to the DNA polymerase type-Y family. As to quaternary structure, monomer. Requires Mg(2+) as cofactor.

Its subcellular location is the cytoplasm. The catalysed reaction is DNA(n) + a 2'-deoxyribonucleoside 5'-triphosphate = DNA(n+1) + diphosphate. Functionally, poorly processive, error-prone DNA polymerase involved in untargeted mutagenesis. Copies undamaged DNA at stalled replication forks, which arise in vivo from mismatched or misaligned primer ends. These misaligned primers can be extended by PolIV. Exhibits no 3'-5' exonuclease (proofreading) activity. May be involved in translesional synthesis, in conjunction with the beta clamp from PolIII. The chain is DNA polymerase IV from Shigella dysenteriae serotype 1 (strain Sd197).